A 949-amino-acid chain; its full sequence is Translation initiation factor IF-2 (949 aa).

Disordered regions lie at residues 54–183 (FLKP…EAAP), 217–288 (LPAA…EVAL), and 305–357 (EVVA…EMQA). 2 stretches are compositionally biased toward basic and acidic residues: residues 67–92 (DQEKPEEIEEKKEAPKSPKRGEERHI) and 101–164 (IEAK…EEAA). Composition is skewed to low complexity over residues 165-183 (RAAAAAPAAPVAAPAEAAP) and 217-228 (LPAAAPAAPSAP). 2 stretches are compositionally biased toward basic and acidic residues: residues 235–288 (PVEE…EVAL) and 330–339 (KYQDNEDRLQ). Positions 445-619 (TRPPVITVMG…EMLNLQSNPT (175 aa)) constitute a tr-type G domain. Positions 454–461 (GHVDHGKT) are G1. GTP is bound at residue 454–461 (GHVDHGKT). Residues 479-483 (GITQH) form a G2 region. The segment at 501-504 (DTPG) is G3. GTP is bound by residues 501 to 505 (DTPGH) and 555 to 558 (NKID). Positions 555–558 (NKID) are G4. Residues 591–593 (SAK) form a G5 region.

This sequence belongs to the TRAFAC class translation factor GTPase superfamily. Classic translation factor GTPase family. IF-2 subfamily.

It is found in the cytoplasm. Its function is as follows. One of the essential components for the initiation of protein synthesis. Protects formylmethionyl-tRNA from spontaneous hydrolysis and promotes its binding to the 30S ribosomal subunits. Also involved in the hydrolysis of GTP during the formation of the 70S ribosomal complex. This chain is Translation initiation factor IF-2, found in Magnetococcus marinus (strain ATCC BAA-1437 / JCM 17883 / MC-1).